The sequence spans 283 residues: Probable endonuclease 4 (283 aa).

Residues His69, His109, Glu145, Asp179, His182, His216, Asp229, His231, and Glu261 each contribute to the Zn(2+) site.

The protein belongs to the AP endonuclease 2 family. It depends on Zn(2+) as a cofactor.

It carries out the reaction Endonucleolytic cleavage to 5'-phosphooligonucleotide end-products.. Functionally, endonuclease IV plays a role in DNA repair. It cleaves phosphodiester bonds at apurinic or apyrimidinic (AP) sites, generating a 3'-hydroxyl group and a 5'-terminal sugar phosphate. This chain is Probable endonuclease 4, found in Desulfosudis oleivorans (strain DSM 6200 / JCM 39069 / Hxd3) (Desulfococcus oleovorans).